The primary structure comprises 340 residues: Guanine nucleotide-binding protein G(I)/G(S)/G(T) subunit beta-3 (340 aa).

7 WD repeats span residues 53–83 (GHLA…IVWD), 95–125 (LRSS…SIYN), 141–170 (AHTG…ALWD), 182–212 (GHTG…KLWD), 224–254 (GHES…RLFD), 268–298 (SIIC…NVWD), and 310–340 (GHDN…KIWN).

It belongs to the WD repeat G protein beta family. In terms of assembly, g proteins are composed of 3 units, alpha, beta and gamma. Interacts with RASD2.

Its function is as follows. Guanine nucleotide-binding proteins (G proteins) are involved as a modulator or transducer in various transmembrane signaling systems. The beta and gamma chains are required for the GTPase activity, for replacement of GDP by GTP, and for G protein-effector interaction. The chain is Guanine nucleotide-binding protein G(I)/G(S)/G(T) subunit beta-3 (Gnb3) from Mus musculus (Mouse).